Consider the following 328-residue polypeptide: Tyrosine--tRNA ligase (328 aa).

Y33 serves as a coordination point for L-tyrosine. The short motif at 38–46 (PSGVLHIGH) is the 'HIGH' region element. Positions 154, 158, 161, and 176 each coordinate L-tyrosine. The segment at 193 to 227 (EPPTSLHTPLIADLGTGRGKMSSSEGVTISMEDSR) is disordered. Residues 212–216 (KMSSS) carry the 'KMSKS' region motif. S215 is a binding site for ATP.

Belongs to the class-I aminoacyl-tRNA synthetase family. TyrS type 3 subfamily. In terms of assembly, homodimer.

Its subcellular location is the cytoplasm. It carries out the reaction tRNA(Tyr) + L-tyrosine + ATP = L-tyrosyl-tRNA(Tyr) + AMP + diphosphate + H(+). Its function is as follows. Catalyzes the attachment of tyrosine to tRNA(Tyr) in a two-step reaction: tyrosine is first activated by ATP to form Tyr-AMP and then transferred to the acceptor end of tRNA(Tyr). This is Tyrosine--tRNA ligase from Halorubrum lacusprofundi (strain ATCC 49239 / DSM 5036 / JCM 8891 / ACAM 34).